The primary structure comprises 228 residues: MEKGHILIVEDEEKIARVLQLELEYEGYSVTIKHNGTEGLDAAAEGGYSLVLLDVMLPGLSGLEVLRRLRKTDSQTPVILLTARDSIPDKVTGLDIGANDYVTKPFEIEELLARIRAALRQNGTKTEDIGTFLTYDDLRVNEKTREVRRGDKEVELTPREFDLLVYMLKHPQQVLTREQILSSVWGFDYIGDTNVVDVYIRYIRKKLDYPYEKQLIHTIRGVGYAIKG.

The Response regulatory domain occupies 5 to 119 (HILIVEDEEK…ELLARIRAAL (115 aa)). Position 54 is a 4-aspartylphosphate (Asp54). The segment at residues 130-228 (GTFLTYDDLR…IRGVGYAIKG (99 aa)) is a DNA-binding region (ompR/PhoB-type).

In terms of processing, phosphorylated by YkoH.

Its subcellular location is the cytoplasm. In terms of biological role, probable member of the two-component regulatory system YkoH/YkoG. This is an uncharacterized protein from Bacillus subtilis (strain 168).